The primary structure comprises 1126 residues: MFFKGKKKDKEKEKSHGNIGNVISVENKTGSQSNLHVEQNLSNEDLKIQFSQLLYELGVPEAKRVEMELWSNDKKWMLLVQNKDKIKENEEKMKQKGSLYETPQFYLSLLRENASIQKTISDLKVSLASNKLSWIDSFIGLSGFDEILKIFQTFQLKPEKNSIDFLILFDCVNIIKSILNSQSGVKSVMTTSHTFKVLVLCLDQSYPPELRNAVLQLTAALTLLPTVGHSYVLEAIENFKVSNREKVRFQTIIEGAKSVSNTQLHYEYLTSFMNLVNSIVNSPADLQVRIGLRSEFTALKLIELISNSKGVSEDLDTQINLFFECMEEDNDEVGAHYKEVNIRSPSEVSTKIDTLLQSHPALHHHFISIIKGLYTLASTQSDLGGSMWNILDESVGLILKDPSKESQLEKLQNENNNLKLQLSEIKLNNSNNNNNNNNSNNNNNDSNVSTPNINTGSPLLPPQQYQDLEQKLQLTQNEKNESQNKVKQLESEIKGLNSTLTGLQLKVTKLEADLLSVSVTTPPSDTNGTTSPPIEAPSSPSLGAPPPPPPPPPAPPVSGGGPPPPPPPPPPSSGGGPPPPPPPPSSGGPPPPPPPPGGMKKPGAPAVPNLPPKKSSVPSVKMVGLQWKKVNNNVIENSIWMNVKDYNLNDQFKQLEELFQVKKPTATTPTAPVGGASNVAVGGGSGSKSIVSTPTISILDPKRSQAIMIMLSRFKISFPDLSKAITNLDESKLNLEDAKSLLKFVPSSEEIELLKEEDPSCFGKPEQFLWELSKINRISEKLECFIFKQKLSTQIEELTPDINALLKGSMETKNNKSFHQILEIVLSLGNFINGGTPRGDIYGFKLDSLSGLLDCRSPSDSKVTLMTWLIQFLENKHPSLLEFHQEFTAIDEAKRVSIQNLRSEVASLKKGLTLLTNEVEKSEGASKTILSGFVGKSTDAVTLIEKQFNTALESFNSTVQFYGEDVKTSSPEEFFQHVSKFKNEFKRTIESIQKERENVQKLAARKKAAASGPSVPSASGSSINIAPKSGVSPITPTSKSSISISQKPPQSTQPSISVQQQQQQHHGDDDDDIPQNGTFMDQLMSKMKGGEAIRASRRASQYVFTQNGAGGVGAIDALNAALKNKK.

Residues 1-21 (MFFKGKKKDKEKEKSHGNIGN) form a disordered region. The GBD/FH3 domain occupies 38-406 (EQNLSNEDLK…LILKDPSKES (369 aa)). Over residues 427–447 (LNNSNNNNNNNNSNNNNNDSN) the composition is skewed to low complexity. The interval 427–462 (LNNSNNNNNNNNSNNNNNDSNVSTPNINTGSPLLPP) is disordered. A compositionally biased stretch (polar residues) spans 448-462 (VSTPNINTGSPLLPP). Residues 463–514 (QQYQDLEQKLQLTQNEKNESQNKVKQLESEIKGLNSTLTGLQLKVTKLEADL) are a coiled coil. Residues 518–532 (SVTTPPSDTNGTTSP) are compositionally biased toward polar residues. 2 disordered regions span residues 518–619 (SVTT…SVPS) and 1004–1078 (ARKK…QNGT). The region spanning 527-611 (NGTTSPPIEA…PGAPAVPNLP (85 aa)) is the FH1 domain. Over residues 543 to 597 (GAPPPPPPPPPAPPVSGGGPPPPPPPPPPSSGGGPPPPPPPPSSGGPPPPPPPPG) the composition is skewed to pro residues. Composition is skewed to low complexity over residues 598–607 (GMKKPGAPAV), 1009–1022 (AASGPSVPSASGSS), and 1032–1064 (SPITPTSKSSISISQKPPQSTQPSISVQQQQQQ). In terms of domain architecture, FH2 spans 612 to 1011 (PKKSSVPSVK…LAARKKAAAS (400 aa)). The stretch at 980–1010 (KFKNEFKRTIESIQKERENVQKLAARKKAAA) forms a coiled coil. The region spanning 1071 to 1100 (DDIPQNGTFMDQLMSKMKGGEAIRASRRAS) is the DAD domain.

Belongs to the formin homology family. Diaphanous subfamily. Interacts (via GBD/FH3 domain) with activated Rho-GTPases. Interacts with pfyA and pfyB.

Formins play an important role in the nucleation of actin and the formation of linear actin filaments. In Dictyostelium discoideum (Social amoeba), this protein is Formin-B (forB).